A 266-amino-acid chain; its full sequence is Adaptin ear-binding coat-associated protein 2 (266 aa).

Disordered stretches follow at residues 164 to 191 (SMKKKDGAAGTPRARPTSTGGLSLLPPP) and 244 to 266 (GDFTKSTGSTSSQTQPGAGWVQF). Serine 181 bears the Phosphoserine mark. Positions 243-246 (WGDF) match the WXXF motif 1 motif. Positions 247 to 258 (TKSTGSTSSQTQ) are enriched in low complexity. The WXXF motif 2 motif lies at 263–266 (WVQF).

Belongs to the NECAP family. In terms of assembly, interacts with AP1G1 and AP2A1 components of the adapter protein complexes AP-1 and AP-2. Interacts with the GAE domain proteins GGA1, GGA2 and GGA3.

It is found in the cytoplasmic vesicle. It localises to the clathrin-coated vesicle membrane. Its subcellular location is the cell membrane. In terms of biological role, involved in endocytosis. This is Adaptin ear-binding coat-associated protein 2 (NECAP2) from Bos taurus (Bovine).